A 281-amino-acid chain; its full sequence is Small ribosomal subunit protein uS3 (281 aa).

The KH type-2 domain maps to 38–106 (IRRLLSTGLE…QVQLNILEVK (69 aa)). A disordered region spans residues 218-281 (APAGAERARR…VTHEPQIAES (64 aa)). A compositionally biased stretch (low complexity) spans 238–252 (SGAAGTTVTGTDAGR).

Belongs to the universal ribosomal protein uS3 family. As to quaternary structure, part of the 30S ribosomal subunit. Forms a tight complex with proteins S10 and S14.

In terms of biological role, binds the lower part of the 30S subunit head. Binds mRNA in the 70S ribosome, positioning it for translation. This Mycobacterium leprae (strain TN) protein is Small ribosomal subunit protein uS3.